Consider the following 451-residue polypeptide: ACT domain-containing protein ACR4 (451 aa).

4 consecutive ACT domains span residues 35-118, 123-200, 259-335, and 337-416; these read VIRV…VIPS, VIEL…NTPR, VVTV…VSEG, and KLEL…QEQQ. The interval 409 to 428 is disordered; the sequence is KNNPQEQQQRQKSPSHESPT. Positions 410-420 are enriched in polar residues; that stretch reads NNPQEQQQRQK.

Highly expressed in flowers and at lower levels in leaves and siliques.

May bind amino acids. This Arabidopsis thaliana (Mouse-ear cress) protein is ACT domain-containing protein ACR4.